Here is a 213-residue protein sequence, read N- to C-terminus: ATP phosphoribosyltransferase (213 aa).

It belongs to the ATP phosphoribosyltransferase family. Short subfamily. In terms of assembly, heteromultimer composed of HisG and HisZ subunits.

Its subcellular location is the cytoplasm. It catalyses the reaction 1-(5-phospho-beta-D-ribosyl)-ATP + diphosphate = 5-phospho-alpha-D-ribose 1-diphosphate + ATP. It functions in the pathway amino-acid biosynthesis; L-histidine biosynthesis; L-histidine from 5-phospho-alpha-D-ribose 1-diphosphate: step 1/9. Its function is as follows. Catalyzes the condensation of ATP and 5-phosphoribose 1-diphosphate to form N'-(5'-phosphoribosyl)-ATP (PR-ATP). Has a crucial role in the pathway because the rate of histidine biosynthesis seems to be controlled primarily by regulation of HisG enzymatic activity. In Listeria welshimeri serovar 6b (strain ATCC 35897 / DSM 20650 / CCUG 15529 / CIP 8149 / NCTC 11857 / SLCC 5334 / V8), this protein is ATP phosphoribosyltransferase.